Reading from the N-terminus, the 67-residue chain is MGAMEGQLWIVFMWVSGVVCGICVLMSENDNIFNNNNNNIIIIIIIIMMIKIMKIIIINNMIIINND.

A run of 2 helical transmembrane segments spans residues 6–26 (GQLWIVFMWVSGVVCGICVLM) and 38–58 (NNIIIIIIIIMMIKIMKIIII).

Its subcellular location is the membrane. This is an uncharacterized protein from Dictyostelium discoideum (Social amoeba).